The chain runs to 485 residues: MKQNFFAVDLGATSGRTILGSFIEGGLNLEEINRFPNHLIEVGGHFYWDIYALYRHIIDGLKLVAHRGESIASIGIDTWGVDFVLLGKDGNLLRQPYAYRDPHTVGAPEAFFSRISRSEVYGKTGIQVMNFNSLFQLDTLRRNHDSALEAADKVLFMPDALSYMLTGKMVTEYTIASTAQLVNAHTQRLEPELLKAVGLQEENFGRFVFPGEKIGTLTEEVQKITGLGAIPVIAVAGHDTGSAVAAVPALDRNFAYLSSGTWSLMGVETDAPVITAETEALNFTNEGGVEGTIRLLKNICGMWLLERCRLNWGDTSYPELITEADSCEPFRSLINPDDDCFANPADMEQAIREYCRTTGQPVPEQRGQIVRCIFESLALRYRQVLENLRALSPRPIETLHVIGGGSRNDLLNQFTANAIGIPVVAGPSEATAIGNVMIQAMTVGEATDVAGMRQLISRSIPLKTYHPQDMAAWDAAYIHFKNCVR.

Position 12 to 16 (12 to 16 (ATSGR)) interacts with ATP. Residues Gly-80 and 238-240 (HDT) contribute to the substrate site. Residue Asp-239 is the Proton acceptor of the active site. An ATP-binding site is contributed by Thr-261. Residue Asn-298 participates in substrate binding. Residue Glu-306 coordinates ATP. Cys-355 and Cys-372 form a disulfide bridge. Gly-404 contacts ATP.

This sequence belongs to the rhamnulokinase family. Mg(2+) is required as a cofactor.

The enzyme catalyses L-rhamnulose + ATP = L-rhamnulose 1-phosphate + ADP + H(+). The protein operates within carbohydrate degradation; L-rhamnose degradation; glycerone phosphate from L-rhamnose: step 2/3. Involved in the catabolism of L-rhamnose (6-deoxy-L-mannose). Catalyzes the transfer of the gamma-phosphate group from ATP to the 1-hydroxyl group of L-rhamnulose to yield L-rhamnulose 1-phosphate. This Bacteroides thetaiotaomicron (strain ATCC 29148 / DSM 2079 / JCM 5827 / CCUG 10774 / NCTC 10582 / VPI-5482 / E50) protein is Rhamnulokinase.